The primary structure comprises 242 residues: Small ribosomal subunit protein uS2 (242 aa).

Belongs to the universal ribosomal protein uS2 family.

The sequence is that of Small ribosomal subunit protein uS2 from Shewanella oneidensis (strain ATCC 700550 / JCM 31522 / CIP 106686 / LMG 19005 / NCIMB 14063 / MR-1).